The primary structure comprises 458 residues: Neuronal acetylcholine receptor subunit beta-3 (458 aa).

Residues 1-21 (MLPDFMLVLIVLGIPSSATTG) form the signal peptide. Residues 22 to 237 (FNSIAENEDA…VLRRLPLFYT (216 aa)) are Extracellular-facing. N-linked (GlcNAc...) asparagine glycans are attached at residues Asn-51, Asn-138, and Asn-166. Cys-153 and Cys-167 are joined by a disulfide. 3 consecutive transmembrane segments (helical) span residues 238 to 258 (LFLI…FYLP), 267 to 287 (LSTS…EIIP), and 300 to 320 (LLFI…VINV). Residues 321-428 (HHRSSSTYHP…WKFVAQVLDR (108 aa)) are Cytoplasmic-facing. The chain crosses the membrane as a helical span at residues 429 to 449 (IFLWLFLIVSVTGSVLIFTPA).

It belongs to the ligand-gated ion channel (TC 1.A.9) family. Acetylcholine receptor (TC 1.A.9.1) subfamily. Beta-3/CHRNB3 sub-subfamily. As to quaternary structure, neuronal AChR seems to be composed of two different type of subunits: alpha and beta. CHRNB3/beta-3 subunit is only able to form functional nAChRs when co-assembled with another beta subunit. Participates in pentameric assemblies along with CHRNA4/alpha-4 and CHRNB2/beta-2 subunits and with CHRNA6/alpha-6 as well, forming stoichiometries such as (CHRNA3:CHRNB4)2:CHRNB3, (CHRNA4:CHRNB2)2:CHRNB3 or (CHRNA6:CHRNB2)2:CHRNB3.

Its subcellular location is the synaptic cell membrane. The protein resides in the cell membrane. The catalysed reaction is Ca(2+)(in) = Ca(2+)(out). It carries out the reaction K(+)(in) = K(+)(out). The enzyme catalyses Na(+)(in) = Na(+)(out). With respect to regulation, activated by a myriad of ligands such as acetylcholine, cytisine, nicotine, choline and epibatidine. In terms of biological role, component of neuronal acetylcholine receptors (nAChRs) that function as pentameric, ligand-gated cation channels with high calcium permeability among other activities. nAChRs are excitatory neurotrasnmitter receptors formed by a collection of nAChR subunits known to mediate synaptic transmission in the nervous system and the neuromuscular junction. Each nAchR subunit confers differential attributes to channel properties, including activation, deactivation and desensitization kinetics, pH sensitivity, cation permeability, and binding to allosteric modulators. Has an accessory rather than functional role and is only able to form functional nAChRs when co-assembled with another beta subunit. Participates in pentameric assemblies along with CHRNA3, CHRNA4, CHRNA6, CHRNB2 and CHRNB4. Modulates receptor assembly and increases receptor sensitivity to nicotine when associated with CHRNB2, CHRNA4 and/or CHRNA6 as well as CHRNA3 and CHRNB4. Seems to play a role in nicotine addiction. This is Neuronal acetylcholine receptor subunit beta-3 from Homo sapiens (Human).